We begin with the raw amino-acid sequence, 169 residues long: uncharacterized protein (169 aa).

Disordered stretches follow at residues 32 to 53 and 148 to 169; these read VSGP…APAP and VSGS…AGGA.

This is an uncharacterized protein from Homo sapiens (Human).